The following is a 481-amino-acid chain: UDP-N-acetylmuramoyl-L-alanyl-D-glutamate--L-lysine ligase (481 aa).

Serine 42 lines the UDP-N-acetyl-alpha-D-muramoyl-L-alanyl-D-glutamate pocket. ATP is bound at residue 118 to 124; that stretch reads GTKGKTT. Residues glutamine 158, 160-161, serine 187, and arginine 195 each bind UDP-N-acetyl-alpha-D-muramoyl-L-alanyl-D-glutamate; that span reads TT. The residue at position 229 (lysine 229) is an N6-carboxylysine. An L-lysine recognition motif motif is present at residues 404-407; it reads DDPN.

This sequence belongs to the MurCDEF family. MurE subfamily. In terms of processing, carboxylation is probably crucial for Mg(2+) binding and, consequently, for the gamma-phosphate positioning of ATP.

It is found in the cytoplasm. The catalysed reaction is UDP-N-acetyl-alpha-D-muramoyl-L-alanyl-D-glutamate + L-lysine + ATP = UDP-N-acetyl-alpha-D-muramoyl-L-alanyl-gamma-D-glutamyl-L-lysine + ADP + phosphate + H(+). It functions in the pathway cell wall biogenesis; peptidoglycan biosynthesis. In terms of biological role, catalyzes the addition of L-lysine to the nucleotide precursor UDP-N-acetylmuramoyl-L-alanyl-D-glutamate (UMAG) in the biosynthesis of bacterial cell-wall peptidoglycan. The chain is UDP-N-acetylmuramoyl-L-alanyl-D-glutamate--L-lysine ligase from Streptococcus pyogenes serotype M6 (strain ATCC BAA-946 / MGAS10394).